Consider the following 104-residue polypeptide: uncharacterized protein (104 aa).

This is an uncharacterized protein from Pasteurella multocida (strain Pm70).